The sequence spans 396 residues: Decapping and exoribonuclease protein (396 aa).

Residues 1–20 show a composition bias toward basic and acidic residues; the sequence is MDPRGTKRGAEKTEVAEPRN. Residues 1-37 form a disordered region; sequence MDPRGTKRGAEKTEVAEPRNKLPRPAPSLPTDPALYS. Substrate-binding positions include Arg-58, Glu-101, and 131–133; that span reads WRG. Glu-192 is a Mg(2+) binding site. The substrate site is built by Cys-217 and Glu-234. Mg(2+)-binding residues include Glu-234, Asp-236, Glu-253, and Leu-254. Substrate contacts are provided by Lys-255 and Gln-280. Position 392 is a phosphothreonine (Thr-392). Position 394 is a phosphoserine (Ser-394).

It belongs to the DXO/Dom3Z family. Mg(2+) serves as cofactor. In terms of tissue distribution, ubiquitously expressed.

The protein resides in the nucleus. It catalyses the reaction a 5'-end triphospho-ribonucleoside in mRNA + H2O = a 5'-end phospho-ribonucleoside in mRNA + diphosphate + H(+). It carries out the reaction a 5'-end NAD(+)-phospho-ribonucleoside in mRNA + H2O = a 5'-end phospho-ribonucleoside in mRNA + NAD(+) + H(+). The enzyme catalyses a 5'-end NAD(+)-phospho-ribonucleoside in snoRNA + H2O = a 5'-end phospho-ribonucleoside in snoRNA + NAD(+) + H(+). The catalysed reaction is a 5'-end (N(7)-methyl 5'-triphosphoguanosine)-ribonucleoside-ribonucleotide in mRNA + H2O = a (N(7)-methyl 5'-triphosphoguanosine)-nucleoside + a 5'-end phospho-ribonucleoside in mRNA + H(+). It catalyses the reaction a 5'-end FAD-phospho-ribonucleoside in mRNA + H2O = a 5'-end phospho-ribonucleoside in mRNA + FAD + H(+). It carries out the reaction a 5'-end CoA-ribonucleoside in mRNA + H2O = 3'-dephospho-CoA + a 5'-end phospho-ribonucleoside in mRNA + H(+). Its function is as follows. Decapping enzyme for NAD-capped RNAs: specifically hydrolyzes the nicotinamide adenine dinucleotide (NAD) cap from a subset of RNAs by removing the entire NAD moiety from the 5'-end of an NAD-capped RNA. The NAD-cap is present at the 5'-end of some RNAs and snoRNAs. In contrast to the canonical 5'-end N7 methylguanosine (m7G) cap, the NAD cap promotes mRNA decay. Preferentially acts on NAD-capped transcripts in response to environmental stress. Also acts as a non-canonical decapping enzyme that removes the entire cap structure of m7G capped or incompletely capped RNAs and mediates their subsequent degradation. Specifically degrades pre-mRNAs with a defective 5'-end m7G cap and is part of a pre-mRNA capping quality control. Has decapping activity toward incomplete 5'-end m7G cap mRNAs such as unmethylated 5'-end-capped RNA (cap0), while it has no activity toward 2'-O-ribose methylated m7G cap (cap1). In contrast to canonical decapping enzymes DCP2 and NUDT16, which cleave the cap within the triphosphate linkage, the decapping activity releases the entire cap structure GpppN and a 5'-end monophosphate RNA. Also has 5'-3' exoribonuclease activities: The 5'-end monophosphate RNA is then degraded by the 5'-3' exoribonuclease activity, enabling this enzyme to decap and degrade incompletely capped mRNAs. Also possesses RNA 5'-pyrophosphohydrolase activity by hydrolyzing the 5'-end triphosphate to release pyrophosphates. Exhibits decapping activity towards FAD-capped RNAs. Exhibits decapping activity towards dpCoA-capped RNAs in vitro. The protein is Decapping and exoribonuclease protein of Homo sapiens (Human).